Here is a 537-residue protein sequence, read N- to C-terminus: Myosin-binding protein H (537 aa).

The segment covering 1-25 has biased composition (low complexity); that stretch reads MTGKTAPAAAKKAPAAKKAPAPASK. The segment at 1 to 138 is disordered; sequence MTGKTAPAAA…KPKEEPPSVP (138 aa). A compositionally biased stretch (basic and acidic residues) spans 26-69; the sequence is KAPEPAPKEKPAPTPKEGHAPTPKEEHAPPPKEEHAPPPKEEHA. Residues 87 to 104 are compositionally biased toward low complexity; the sequence is EQPAAPAAEHAPTPTHEA. Residues 112–124 are compositionally biased toward pro residues; sequence PPPAAPAEAPAPE. The Fibronectin type-III 1 domain maps to 137-232; it reads VPLSLAVEEV…LEQPVLIREI (96 aa). The 89-residue stretch at 236-324 folds into the Ig-like C2-type 1 domain; it reads PRIRLPRQLR…NGAEDKAILD (89 aa). In terms of domain architecture, Fibronectin type-III 2 spans 333–428; sequence PPQNLKLVDV…AAGVAHIKKT (96 aa). The region spanning 444–528 is the Ig-like C2-type 2 domain; it reads PKFTQPLTDR…VNPLGEASVD (85 aa).

The protein belongs to the immunoglobulin superfamily. MyBP family. Skeletal muscle. Seems to be also expressed in the slow tonic ald muscle. Not detected in gizzard or heart.

Functionally, binds to myosin; probably involved in interaction with thick myofilaments in the A-band. The sequence is that of Myosin-binding protein H (MYBPH) from Gallus gallus (Chicken).